The sequence spans 38 residues: TESPIPVPAPAPAAKPKPKRVSKRPASHPPYSDMIAAA.

Residues 1–15 (TESPIPVPAPAPAAK) show a composition bias toward pro residues. The tract at residues 1-38 (TESPIPVPAPAPAAKPKPKRVSKRPASHPPYSDMIAAA) is disordered. A compositionally biased stretch (basic residues) spans 16–26 (PKPKRVSKRPA).

This sequence belongs to the histone H1/H5 family. In terms of tissue distribution, erythroid cells.

It is found in the nucleus. The protein localises to the chromosome. Functionally, histone H5 performs the same function as H1, being necessary for the condensation of nucleosome chains into higher order structures, and replaces histone H1 in certain cells. This is Histone H5 from Columba livia (Rock dove).